A 305-amino-acid chain; its full sequence is Olfactory receptor 4B13 (305 aa).

At 1-25 (MANKNNVTELIFTGLFQDPEVQKVC) the chain is on the extracellular side. Asn6 carries an N-linked (GlcNAc...) asparagine glycan. A helical transmembrane segment spans residues 26 to 46 (FVLFLPVYLATLLGNSLILVA). The Cytoplasmic portion of the chain corresponds to 47 to 55 (VSISKTLHS). A helical membrane pass occupies residues 56 to 76 (PMYFFLSSLSLVEICYSSTIV). Over 77 to 95 (PKFITDLLAKVKTISLKGC) the chain is Extracellular. Cys95 and Cys187 are joined by a disulfide. Residues 96-116 (LTQIFFSHFFGVVEVILLVVM) form a helical membrane-spanning segment. Topologically, residues 117–141 (AYDRYVAICKPLHYMNIMSRQVCHM) are cytoplasmic. The chain crosses the membrane as a helical span at residues 142–162 (LVAGSWLGGFIHSIIQIIITI). Over 163-202 (PLPFCGPNVIDHYFCDLQQLFKLACTDTFMEGFIVMANSG) the chain is Extracellular. The helical transmembrane segment at 203–223 (LISIVSLFILVSSYAVILISL) threads the bilayer. Residues 224 to 236 (RKRSAEGRRKALS) are Cytoplasmic-facing. The chain crosses the membrane as a helical span at residues 237 to 257 (TCASHITVVILFFVPGAFIYM). Residues 258-266 (RPSSTFTED) are Extracellular-facing. Residues 267–287 (KLVSVFYTVITPMLNPIVYTL) form a helical membrane-spanning segment. Topologically, residues 288-305 (RNTEMKNAIRMSWKQKDS) are cytoplasmic.

Belongs to the G-protein coupled receptor 1 family.

Its subcellular location is the cell membrane. In terms of biological role, odorant receptor. This chain is Olfactory receptor 4B13, found in Mus musculus (Mouse).